The chain runs to 721 residues: Long-chain-fatty-acid--CoA ligase ACSBG1 (721 aa).

Positions 1–64 are disordered; the sequence is MPRSSEAGYC…SHGLELSAPE (64 aa). The span at 26 to 43 shows a compositional bias: polar residues; the sequence is QQGASMGTSPDNSQTSSL. Phosphoserine occurs at positions 34, 50, 53, and 70. Residues 279–287, 469–474, Asp-547, and Arg-562 contribute to the ATP site; these read TSGTTGNPK and AGYGLS. At Tyr-655 the chain carries Phosphotyrosine. Position 698 (Lys-698) interacts with ATP.

The protein belongs to the ATP-dependent AMP-binding enzyme family. Bubblegum subfamily. In terms of tissue distribution, present in testis, at a lower level in brain, and at a very low level in ovary. Not detected in other tissues. tested. Present in Leydig cells of the adult testis and to a lesser degree in the seminiferous tubules in spermatogonia and Sertoli cells (at protein level).

The protein localises to the cytoplasm. It localises to the cytoplasmic vesicle. Its subcellular location is the microsome. It is found in the endoplasmic reticulum. The protein resides in the cell membrane. The enzyme catalyses a long-chain fatty acid + ATP + CoA = a long-chain fatty acyl-CoA + AMP + diphosphate. The catalysed reaction is (E)-hexadec-2-enoate + ATP + CoA = (2E)-hexadecenoyl-CoA + AMP + diphosphate. It carries out the reaction hexadecanoate + ATP + CoA = hexadecanoyl-CoA + AMP + diphosphate. In terms of biological role, catalyzes the conversion of fatty acids such as long-chain and very long-chain fatty acids to their active form acyl-CoAs for both synthesis of cellular lipids, and degradation via beta-oxidation. Can activate diverse saturated, monosaturated and polyunsaturated fatty acids. The sequence is that of Long-chain-fatty-acid--CoA ligase ACSBG1 from Rattus norvegicus (Rat).